The following is a 145-amino-acid chain: D-aminoacyl-tRNA deacylase (145 aa).

A Gly-cisPro motif, important for rejection of L-amino acids motif is present at residues 137 to 138 (GP).

The protein belongs to the DTD family. In terms of assembly, homodimer.

Its subcellular location is the cytoplasm. The catalysed reaction is glycyl-tRNA(Ala) + H2O = tRNA(Ala) + glycine + H(+). It catalyses the reaction a D-aminoacyl-tRNA + H2O = a tRNA + a D-alpha-amino acid + H(+). In terms of biological role, an aminoacyl-tRNA editing enzyme that deacylates mischarged D-aminoacyl-tRNAs. Also deacylates mischarged glycyl-tRNA(Ala), protecting cells against glycine mischarging by AlaRS. Acts via tRNA-based rather than protein-based catalysis; rejects L-amino acids rather than detecting D-amino acids in the active site. By recycling D-aminoacyl-tRNA to D-amino acids and free tRNA molecules, this enzyme counteracts the toxicity associated with the formation of D-aminoacyl-tRNA entities in vivo and helps enforce protein L-homochirality. This Legionella pneumophila (strain Lens) protein is D-aminoacyl-tRNA deacylase.